The following is an 88-amino-acid chain: Small ribosomal subunit protein uS19 (88 aa).

It belongs to the universal ribosomal protein uS19 family.

In terms of biological role, protein S19 forms a complex with S13 that binds strongly to the 16S ribosomal RNA. In Chlamydia caviae (strain ATCC VR-813 / DSM 19441 / 03DC25 / GPIC) (Chlamydophila caviae), this protein is Small ribosomal subunit protein uS19.